The sequence spans 215 residues: Meiotic chromosome segregation protein P8B7.28c (215 aa).

A disordered region spans residues 159 to 202 (TINSEYADDVSDNTDEERTESKGQQESNSAEEYDDDDSDEDRME). Acidic residues-rich tracts occupy residues 164 to 176 (YADDVSDNTDEER) and 187 to 201 (SAEEYDDDDSDEDRM).

It localises to the nucleus. The protein resides in the nucleolus. Required for meiotic chromosome segregation. This is Meiotic chromosome segregation protein P8B7.28c from Schizosaccharomyces pombe (strain 972 / ATCC 24843) (Fission yeast).